Here is a 337-residue protein sequence, read N- to C-terminus: GTPase Obg (337 aa).

The Obg domain occupies 1–161; it reads MNLTDNAVIF…FKIKLDFVFL (161 aa). The 172-residue stretch at 162–333 folds into the OBG-type G domain; sequence ADVGLFGYSN…LINKILLFLE (172 aa). GTP-binding positions include 168-175, 193-197, 214-217, 282-285, and 314-316; these read GYSNTGRS, FTTLF, DIPS, NKTD, and SLN. Mg(2+)-binding residues include Ser175 and Thr195.

It belongs to the TRAFAC class OBG-HflX-like GTPase superfamily. OBG GTPase family. In terms of assembly, monomer. It depends on Mg(2+) as a cofactor.

It localises to the cytoplasm. Functionally, an essential GTPase which binds GTP, GDP and possibly (p)ppGpp with moderate affinity, with high nucleotide exchange rates and a fairly low GTP hydrolysis rate. Plays a role in control of the cell cycle, stress response, ribosome biogenesis and in those bacteria that undergo differentiation, in morphogenesis control. The sequence is that of GTPase Obg from Wigglesworthia glossinidia brevipalpis.